We begin with the raw amino-acid sequence, 286 residues long: Shikimate dehydrogenase (NADP(+)) (286 aa).

Residues 20 to 22 and Ser67 each bind shikimate; that span reads SLS. Lys71 functions as the Proton acceptor in the catalytic mechanism. Positions 92 and 107 each coordinate shikimate. Residues 131-135 and Ala230 each bind NADP(+); that span reads GGGGA. Residue Tyr232 coordinates shikimate. Gly253 provides a ligand contact to NADP(+).

This sequence belongs to the shikimate dehydrogenase family. As to quaternary structure, homodimer.

It carries out the reaction shikimate + NADP(+) = 3-dehydroshikimate + NADPH + H(+). Its pathway is metabolic intermediate biosynthesis; chorismate biosynthesis; chorismate from D-erythrose 4-phosphate and phosphoenolpyruvate: step 4/7. Functionally, involved in the biosynthesis of the chorismate, which leads to the biosynthesis of aromatic amino acids. Catalyzes the reversible NADPH linked reduction of 3-dehydroshikimate (DHSA) to yield shikimate (SA). This chain is Shikimate dehydrogenase (NADP(+)), found in Lactococcus lactis subsp. cremoris (strain SK11).